Consider the following 1253-residue polypeptide: MASTVTLEDALSNVDLLEELPLPDQQPCIEPLPSSLIYQPNFNTNFEDRNAFVTGIARYIEQATVHSSMNDMLEEGQQYAVMLYTWRCCSRAIPQVKCNEQPNRVEIYEKTVEVLEPEVNKLMNFMYFQRTAIDRFCGEVRRLCHAERRKDFVSEAYLLTLGKFINMFAVLDELKNMKCSVKNDHSAYKRAAQFLRKMSEPSSIQESQNLSMFLANHNKITQSLQQQLEVINGYDELLADIVNLCVDYYENKMYLTPSERHMLLKVMGFGLYLMDGSNSNIYKLEAKKRINLTKIDKFFKQLQVVPLFGDMQIELARYIKTSAHYEENKSRWSCTSTGSSPQYNVCEQMIQIREGHMRFISELARYSNSEVVTGSGRQDAQKTDSEYRKLFDLALQGLQLLSQWSAQIMEVYSWKLVHPTDKYSNKECPDNAEEYERATRYNYTSEEKFALVEVLAMIKGLQVLMGRMESVFNHAIRHTIYSALQDFAQVTLREPLRQAIKKKKNVVQSVLQAIRKTVCDWETGREPHNDPALRGEKDPKGGFDIKVPRRAVGPSSTQLYMVRTMLESLVADKSGSKKTLRSSLEGPTILDIEKFHRESFFYTHLLNFSETLQQCCDLSQLWFREFFLELTMGRRIQFPIEMSMPWILTDHILETKEASMMEYVLYSLDLYNDSAHYALTKFKKQFLYDEIEAEVNLCFDQFVYKLADQIFAYYKVIAGSLLLDKRLRAECKNQGANISWPSSNRYETLLKQRHVQLLGRSIDLNRLITQRVSSALYKSLELAISRFESEDLTSIMELEGLLDINRMTHKLLSKYLTLDSIDAMFREANHNVSAPYGRITLHVFWELNYDFLPNYCYNGSTNRFVRTILPFSQEFQRDKPPNAQPQYLYGSKALNLAYSSIYSLYRNFVGPPHIKAICRLLGYQGIAVVMEELLKVVKSLLQGTILQYVKTLMEVMPKICRLPRHEYGSPGILEFFHHQLKDIVEYAELKSVCFQNLREVGNALLFCLLTEQSLSQEEVCDLLHAAPFQNILPRVHVKEGERLDAKMKRLEAKYTALHLVPLIERLGTPQQIAIAREGDLLTKERLCCGLSIFEVILTRVRAYLDDPIWRGPLPSNGVMHVDECVEFHRLWSAMQFVYCIPVGAHEFTVEQCFGDGLNWAGCMIITLLGQHRRFDILDFSYHLLKVQKHDGKDEIIKSVPLKKMVDRIRKFQILNDEIFAILNKYLKSGDGENMPVEHVRCFQPPIHQSLASN.

Belongs to the CYFIP family.

It is found in the cytoplasm. It localises to the perinuclear region. The protein localises to the cell projection. The protein resides in the lamellipodium. Its subcellular location is the ruffle. It is found in the synapse. It localises to the synaptosome. Functionally, involved in formation of membrane ruffles and lamellipodia protrusions and in axon outgrowth. Binds to F-actin but not to RNA. This is Cytoplasmic FMR1-interacting protein 1 homolog from Danio rerio (Zebrafish).